The primary structure comprises 227 residues: Ribonuclease 3 (227 aa).

In terms of domain architecture, RNase III spans 4 to 133; that stretch reads FEELEKLLDY…LIAAIYLDSD (130 aa). A Mg(2+)-binding site is contributed by Glu-46. Asp-50 is a catalytic residue. Mg(2+)-binding residues include Asn-119 and Glu-122. Glu-122 is an active-site residue. In terms of domain architecture, DRBM spans 158–226; sequence DPKTALQEWA…ARELLHKLKL (69 aa).

It belongs to the ribonuclease III family. In terms of assembly, homodimer. The cofactor is Mg(2+).

Its subcellular location is the cytoplasm. The catalysed reaction is Endonucleolytic cleavage to 5'-phosphomonoester.. Its function is as follows. Digests double-stranded RNA. Involved in the processing of primary rRNA transcript to yield the immediate precursors to the large and small rRNAs (23S and 16S). Processes some mRNAs, and tRNAs when they are encoded in the rRNA operon. Processes pre-crRNA and tracrRNA of type II CRISPR loci if present in the organism. The protein is Ribonuclease 3 of Rickettsia bellii (strain OSU 85-389).